The primary structure comprises 545 residues: Chaperonin GroEL 2 (545 aa).

ATP contacts are provided by residues 29–32, 86–90, Gly413, 479–481, and Asp495; these read TLGP, DGTTT, and NAA.

This sequence belongs to the chaperonin (HSP60) family. In terms of assembly, forms a cylinder of 14 subunits composed of two heptameric rings stacked back-to-back. Interacts with the co-chaperonin GroES.

The protein resides in the cytoplasm. The enzyme catalyses ATP + H2O + a folded polypeptide = ADP + phosphate + an unfolded polypeptide.. Its function is as follows. Together with its co-chaperonin GroES, plays an essential role in assisting protein folding. The GroEL-GroES system forms a nano-cage that allows encapsulation of the non-native substrate proteins and provides a physical environment optimized to promote and accelerate protein folding. The protein is Chaperonin GroEL 2 of Prochlorococcus marinus (strain MIT 9215).